A 348-amino-acid chain; its full sequence is Dihydroorotase (348 aa).

Zn(2+)-binding residues include His-17 and His-19. Residues 19–21 (HLR) and Asn-45 contribute to the substrate site. Residues Lys-103, His-140, and His-178 each coordinate Zn(2+). Position 103 is an N6-carboxylysine (Lys-103). His-140 is a binding site for substrate. Residue Leu-223 participates in substrate binding. Asp-251 provides a ligand contact to Zn(2+). The active site involves Asp-251. The substrate site is built by His-255 and Ala-267.

It belongs to the metallo-dependent hydrolases superfamily. DHOase family. Class II DHOase subfamily. As to quaternary structure, homodimer. Zn(2+) is required as a cofactor.

The enzyme catalyses (S)-dihydroorotate + H2O = N-carbamoyl-L-aspartate + H(+). Its pathway is pyrimidine metabolism; UMP biosynthesis via de novo pathway; (S)-dihydroorotate from bicarbonate: step 3/3. In terms of biological role, catalyzes the reversible cyclization of carbamoyl aspartate to dihydroorotate. The sequence is that of Dihydroorotase from Edwardsiella ictaluri (strain 93-146).